The chain runs to 450 residues: Tubulin alpha-5 chain (450 aa).

Residues Gln11, Glu71, Gly144, Thr145, Thr179, Asn206, and Asn228 each coordinate GTP. Glu71 is a binding site for Mg(2+). Residue Glu254 is part of the active site.

It belongs to the tubulin family. As to quaternary structure, dimer of alpha and beta chains. A typical microtubule is a hollow water-filled tube with an outer diameter of 25 nm and an inner diameter of 15 nM. Alpha-beta heterodimers associate head-to-tail to form protofilaments running lengthwise along the microtubule wall with the beta-tubulin subunit facing the microtubule plus end conferring a structural polarity. Microtubules usually have 13 protofilaments but different protofilament numbers can be found in some organisms and specialized cells. Mg(2+) serves as cofactor. Undergoes a tyrosination/detyrosination cycle, the cyclic removal and re-addition of a C-terminal tyrosine residue by the enzymes tubulin tyrosine carboxypeptidase (TTCP) and tubulin tyrosine ligase (TTL), respectively.

Its subcellular location is the cytoplasm. The protein resides in the cytoskeleton. The catalysed reaction is GTP + H2O = GDP + phosphate + H(+). Functionally, tubulin is the major constituent of microtubules, a cylinder consisting of laterally associated linear protofilaments composed of alpha- and beta-tubulin heterodimers. Microtubules grow by the addition of GTP-tubulin dimers to the microtubule end, where a stabilizing cap forms. Below the cap, tubulin dimers are in GDP-bound state, owing to GTPase activity of alpha-tubulin. The chain is Tubulin alpha-5 chain (TUBA5) from Zea mays (Maize).